A 500-amino-acid chain; its full sequence is Lysine--tRNA ligase (500 aa).

Glutamate 410 and glutamate 417 together coordinate Mg(2+).

This sequence belongs to the class-II aminoacyl-tRNA synthetase family. Homodimer. Mg(2+) serves as cofactor.

The protein resides in the cytoplasm. It catalyses the reaction tRNA(Lys) + L-lysine + ATP = L-lysyl-tRNA(Lys) + AMP + diphosphate. The protein is Lysine--tRNA ligase of Pseudomonas fluorescens (strain ATCC BAA-477 / NRRL B-23932 / Pf-5).